We begin with the raw amino-acid sequence, 61 residues long: MFGLGITEILLILGIIILIFGAKKLPEVGSGLGRAIQNFKKASSESEEIDVTPSKDKNKDA.

A helical transmembrane segment spans residues 1–21; sequence MFGLGITEILLILGIIILIFG.

It belongs to the TatA/E family. As to quaternary structure, the Tat system comprises two distinct complexes: a TatABC complex, containing multiple copies of TatA, TatB and TatC subunits, and a separate TatA complex, containing only TatA subunits. Substrates initially bind to the TatABC complex, which probably triggers association of the separate TatA complex to form the active translocon.

It localises to the cell inner membrane. Part of the twin-arginine translocation (Tat) system that transports large folded proteins containing a characteristic twin-arginine motif in their signal peptide across membranes. TatA could form the protein-conducting channel of the Tat system. The chain is Sec-independent protein translocase protein TatA from Maridesulfovibrio salexigens (strain ATCC 14822 / DSM 2638 / NCIMB 8403 / VKM B-1763) (Desulfovibrio salexigens).